A 240-amino-acid chain; its full sequence is Citrate synthase-lysine N-methyltransferase CSKMT, mitochondrial (240 aa).

The transit peptide at 1–28 (MAALRRMLHLPSLMMGTCRPFAGSLADS) directs the protein to the mitochondrion.

This sequence belongs to the methyltransferase superfamily.

The protein localises to the mitochondrion. The enzyme catalyses L-lysyl-[citrate synthase] + S-adenosyl-L-methionine = N(6)-methyl-L-lysyl-[citrate synthase] + S-adenosyl-L-homocysteine + H(+). The catalysed reaction is N(6)-methyl-L-lysyl-[citrate synthase] + S-adenosyl-L-methionine = N(6),N(6)-dimethyl-L-lysyl-[citrate synthase] + S-adenosyl-L-homocysteine + H(+). It catalyses the reaction N(6),N(6)-dimethyl-L-lysyl-[citrate synthase] + S-adenosyl-L-methionine = N(6),N(6),N(6)-trimethyl-L-lysyl-[citrate synthase] + S-adenosyl-L-homocysteine + H(+). With respect to regulation, citrate synthase-lysine methyltransferase activity is inhibited by S-adenosylhomocysteine (AdoHcy) and oxaloacetate (OAA). In terms of biological role, protein-lysine methyltransferase that selectively trimethylates citrate synthase (CS) in mitochondria. Seems to conduct trimethylation in a highly distributive manner rather than in a processive manner, and thus introduces a single methyl group per binding event. The polypeptide is Citrate synthase-lysine N-methyltransferase CSKMT, mitochondrial (Homo sapiens (Human)).